The chain runs to 537 residues: Methionine--tRNA ligase (537 aa).

The 'HIGH' region signature appears at 11 to 21; the sequence is AYPNAAPHIGH. Positions 301-305 match the 'KMSKS' region motif; that stretch reads KMSKS. Lysine 304 is a binding site for ATP. A disordered region spans residues 503-537; that stretch reads PPPTGVFPRYQPSEIEGADPVKSSSKRREHNKRRE. Residues 526 to 537 are compositionally biased toward basic residues; that stretch reads SSKRREHNKRRE.

Belongs to the class-I aminoacyl-tRNA synthetase family. MetG type 2B subfamily. In terms of assembly, monomer.

The protein resides in the cytoplasm. It carries out the reaction tRNA(Met) + L-methionine + ATP = L-methionyl-tRNA(Met) + AMP + diphosphate. Functionally, is required not only for elongation of protein synthesis but also for the initiation of all mRNA translation through initiator tRNA(fMet) aminoacylation. In Mycobacterium leprae (strain TN), this protein is Methionine--tRNA ligase.